The following is a 454-amino-acid chain: Kynurenine 3-monooxygenase (454 aa).

It belongs to the aromatic-ring hydroxylase family. KMO subfamily. The cofactor is FAD.

It carries out the reaction L-kynurenine + NADPH + O2 + H(+) = 3-hydroxy-L-kynurenine + NADP(+) + H2O. It participates in cofactor biosynthesis; NAD(+) biosynthesis; quinolinate from L-kynurenine: step 1/3. In terms of biological role, catalyzes the hydroxylation of L-kynurenine (L-Kyn) to form 3-hydroxy-L-kynurenine (L-3OHKyn). Required for synthesis of quinolinic acid. The polypeptide is Kynurenine 3-monooxygenase (Salinispora arenicola (strain CNS-205)).